A 1052-amino-acid polypeptide reads, in one-letter code: Mitotic checkpoint serine/threonine-protein kinase BUB1 beta (1052 aa).

A BUB1 N-terminal domain is found at 56-219 (FESEIRFYSG…LEPSEPQRSS (164 aa)). Residues 105–112 (GETRYYND) carry the Nuclear localization signal motif. The segment at 146-179 (AQFYISWAEEYEARENFKKADIIFQEGIERKAEP) is necessary for interaction with KNL1. 2 disordered regions span residues 206–256 (EEEA…NAVP) and 272–327 (ADTA…TSIP). A D-box motif is present at residues 217–225 (RSSLAELKS). Residue K243 is modified to N6-acetyllysine; by PCAF. At S360 the chain carries Phosphoserine. Positions 361–381 (TRKPGREEGDPLQRVQSHQQG) are disordered. At S428 the chain carries Phosphoserine. The interval 496–552 (SNPREISPAENILQEQPDSKGSSMPFSIFDESLSDKKDKSPATGGPQVLNAQRRPLS) is disordered. A compositionally biased stretch (polar residues) spans 508-520 (LQEQPDSKGSSMP). Phosphoserine occurs at positions 535 and 659. A Phosphoserine; by PLK1 modification is found at S665. A Phosphoserine modification is found at S686. Positions 756 to 1040 (VIKQEHLTCD…TISPEALLTQ (285 aa)) constitute a Protein kinase domain. 762-770 (LTCDDYRLF) is an ATP binding site. T781 carries the phosphothreonine; by PLK1 modification. K784 is a binding site for ATP. Catalysis depends on D871, which acts as the Proton acceptor. T998 is subject to Phosphothreonine; by PLK1. Phosphoserine is present on residues S1033 and S1050.

This sequence belongs to the protein kinase superfamily. Ser/Thr protein kinase family. BUB1 subfamily. In terms of assembly, interacts with CENPE. Interacts with PLK1. Part of a complex containing BUB3, CDC20 and BUB1B. Interacts with anaphase-promoting complex/cyclosome (APC/C). Interacts with KNL1. Interacts with KAT2B. Interacts with RIPK3. Interacts with the closed conformation form of MAD2L1. Interacts with CDC20. Proteolytically cleaved by caspase-3 in a cell cycle specific manner. The cleavage might be involved in the durability of the cell cycle delay. In terms of processing, acetylation at Lys-243 regulates its degradation and timing in anaphase entry. Post-translationally, ubiquitinated. Degraded by the proteasome. Ubiquitinated by UBR5, promoting disassembly of the mitotic checkpoint complex from the APC/C complex. Sumoylated with SUMO2 and SUMO3. The sumoylation mediates the association with CENPE at the kinetochore. In terms of processing, autophosphorylated in vitro. Intramolecular autophosphorylation stimulated by CENPE. Phosphorylated during mitosis and hyperphosphorylated in mitotically arrested cells. Phosphorylation at Ser-659 and Ser-1033 occurs at kinetochores upon mitotic entry with dephosphorylation at the onset of anaphase. Post-translationally, proteolytically cleaved by caspase-3 in a cell cycle specific manner. The cleavage might be involved in the durability of the cell cycle delay. Caspase-3 cleavage is associated with abrogation of the mitotic checkpoint. The major site of cleavage is at Asp-603. In terms of tissue distribution, highly expressed in thymus followed by spleen.

It localises to the cytoplasm. Its subcellular location is the nucleus. It is found in the chromosome. The protein resides in the centromere. The protein localises to the kinetochore. The catalysed reaction is L-seryl-[protein] + ATP = O-phospho-L-seryl-[protein] + ADP + H(+). It carries out the reaction L-threonyl-[protein] + ATP = O-phospho-L-threonyl-[protein] + ADP + H(+). With respect to regulation, kinase activity stimulated by CENPE. Essential component of the mitotic checkpoint. Required for normal mitosis progression and tumor suppression. The mitotic checkpoint delays anaphase until all chromosomes are properly attached to the mitotic spindle. One of its checkpoint functions is to inhibit the activity of the anaphase-promoting complex/cyclosome (APC/C) by blocking the binding of CDC20 to APC/C, independently of its kinase activity. The other is to monitor kinetochore activities that depend on the kinetochore motor CENPE. Required for kinetochore localization of CENPE. Negatively regulates PLK1 activity in interphase cells and suppresses centrosome amplification. Also implicated in triggering apoptosis in polyploid cells that exit aberrantly from mitotic arrest. Essential for tumor suppression. May play a role in regulating aging and fertility. This Mus musculus (Mouse) protein is Mitotic checkpoint serine/threonine-protein kinase BUB1 beta (Bub1b).